Reading from the N-terminus, the 439-residue chain is Ornithine aminotransferase, mitochondrial (439 aa).

The N-terminal 25 residues, 1-25 (MLSKLASLQTIAALRRGVHTSVASA), are a transit peptide targeting the mitochondrion. Residues Lys-49 and Lys-66 each carry the N6-acetyllysine modification. Lys-102 is modified (N6-succinyllysine). Lys-107 is modified (N6-acetyllysine; alternate). An N6-succinyllysine; alternate modification is found at Lys-107. N6-(pyridoxal phosphate)lysine is present on Lys-292. N6-acetyllysine; alternate is present on Lys-362. Residue Lys-362 is modified to N6-succinyllysine; alternate. N6-acetyllysine occurs at positions 386 and 392. N6-acetyllysine; alternate is present on Lys-405. An N6-succinyllysine; alternate modification is found at Lys-405. Residue Lys-421 is modified to N6-acetyllysine.

Belongs to the class-III pyridoxal-phosphate-dependent aminotransferase family. As to quaternary structure, homohexamer. Pyridoxal 5'-phosphate serves as cofactor.

The protein localises to the mitochondrion matrix. The catalysed reaction is L-ornithine + 2-oxoglutarate = L-glutamate 5-semialdehyde + L-glutamate. The protein operates within amino-acid biosynthesis; L-proline biosynthesis; L-glutamate 5-semialdehyde from L-ornithine: step 1/1. Its function is as follows. Catalyzes the reversible interconversion of L-ornithine and 2-oxoglutarate to L-glutamate semialdehyde and L-glutamate. This chain is Ornithine aminotransferase, mitochondrial (Oat), found in Mus musculus (Mouse).